Here is a 529-residue protein sequence, read N- to C-terminus: Bifunctional purine biosynthesis protein PurH (529 aa).

The region spanning threonine 2–threonine 149 is the MGS-like domain.

Belongs to the PurH family.

It catalyses the reaction (6R)-10-formyltetrahydrofolate + 5-amino-1-(5-phospho-beta-D-ribosyl)imidazole-4-carboxamide = 5-formamido-1-(5-phospho-D-ribosyl)imidazole-4-carboxamide + (6S)-5,6,7,8-tetrahydrofolate. The catalysed reaction is IMP + H2O = 5-formamido-1-(5-phospho-D-ribosyl)imidazole-4-carboxamide. It participates in purine metabolism; IMP biosynthesis via de novo pathway; 5-formamido-1-(5-phospho-D-ribosyl)imidazole-4-carboxamide from 5-amino-1-(5-phospho-D-ribosyl)imidazole-4-carboxamide (10-formyl THF route): step 1/1. Its pathway is purine metabolism; IMP biosynthesis via de novo pathway; IMP from 5-formamido-1-(5-phospho-D-ribosyl)imidazole-4-carboxamide: step 1/1. This chain is Bifunctional purine biosynthesis protein PurH, found in Cereibacter sphaeroides (strain ATCC 17029 / ATH 2.4.9) (Rhodobacter sphaeroides).